Here is a 459-residue protein sequence, read N- to C-terminus: NADH-ubiquinone oxidoreductase chain 4 (459 aa).

Transmembrane regions (helical) follow at residues 22–42 (HLSY…LQWL), 61–81 (PIST…ILVS), 94–113 (RTFT…AFSA), 114–134 (LEMM…LIII), 146–166 (AGTY…IALT), 197–217 (WFAL…HLWL), 225–245 (PIAG…YGII), 258–278 (LSYP…LICL), 285–304 (SLIA…AALL), 308–330 (LSIT…LFCL), 352–372 (LLPL…ALPP), 380–400 (LTII…TGLG), and 437–457 (LIMM…QLMT).

It belongs to the complex I subunit 4 family.

It localises to the mitochondrion membrane. The enzyme catalyses a ubiquinone + NADH + 5 H(+)(in) = a ubiquinol + NAD(+) + 4 H(+)(out). In terms of biological role, core subunit of the mitochondrial membrane respiratory chain NADH dehydrogenase (Complex I) that is believed to belong to the minimal assembly required for catalysis. Complex I functions in the transfer of electrons from NADH to the respiratory chain. The immediate electron acceptor for the enzyme is believed to be ubiquinone. This is NADH-ubiquinone oxidoreductase chain 4 (MT-ND4) from Pelomedusa subrufa (African side-necked turtle).